We begin with the raw amino-acid sequence, 130 residues long: MAQTQYYGTGRRKSAIARVYTRTGTGQIRINDKSLEEYFGRKTDRMIVMQALEAVEMTDKLDVNVKVIGGGPSGQAGAIRHGLARALIELDEAMRPVLRKAGYVTRDAREVERKKVGLHKARRRPQYSKR.

This sequence belongs to the universal ribosomal protein uS9 family.

The sequence is that of Small ribosomal subunit protein uS9 from Methylococcus capsulatus (strain ATCC 33009 / NCIMB 11132 / Bath).